Consider the following 164-residue polypeptide: Probable Brix domain-containing ribosomal biogenesis protein (164 aa).

Residues Met1–Glu164 form the Brix domain.

Functionally, probably involved in the biogenesis of the ribosome. The chain is Probable Brix domain-containing ribosomal biogenesis protein from Methanococcus maripaludis (strain DSM 14266 / JCM 13030 / NBRC 101832 / S2 / LL).